A 53-amino-acid polypeptide reads, in one-letter code: UPF0391 membrane protein YtjA (53 aa).

Transmembrane regions (helical) follow at residues 4–24 and 30–48; these read WGIIFLVIALIAAALGFGGLA and AAKIVFVVGIVLFLVSLFM.

This sequence belongs to the UPF0391 family.

It localises to the cell membrane. This Salmonella agona (strain SL483) protein is UPF0391 membrane protein YtjA.